Reading from the N-terminus, the 137-residue chain is Small ribosomal subunit protein uS12 (137 aa).

The disordered stretch occupies residues 1–57 (MPTINQLVRKPRQSKSKKSDSPVLNRGFNSKKKQFTNLNSPQKRGVCTRVGTMTPRK). 3-methylthioaspartic acid is present on Asp102. Residues 118–137 (SGVDGRRQGRSLYGTKKPKN) form a disordered region.

This sequence belongs to the universal ribosomal protein uS12 family. In terms of assembly, part of the 30S ribosomal subunit. Contacts proteins S8 and S17. May interact with IF1 in the 30S initiation complex.

Its function is as follows. With S4 and S5 plays an important role in translational accuracy. In terms of biological role, interacts with and stabilizes bases of the 16S rRNA that are involved in tRNA selection in the A site and with the mRNA backbone. Located at the interface of the 30S and 50S subunits, it traverses the body of the 30S subunit contacting proteins on the other side and probably holding the rRNA structure together. The combined cluster of proteins S8, S12 and S17 appears to hold together the shoulder and platform of the 30S subunit. This Staphylococcus haemolyticus (strain JCSC1435) protein is Small ribosomal subunit protein uS12.